The primary structure comprises 488 residues: MSDQVSDMLEKLELQKEKNQAAATEAKVEEVKEDDKKDVKEELNEDDKKVAKEDDKKEDAKEESKEDAEENNLIQTEYEVRVKLADLQADPNSPLYSAKRFEDLGLDENLLKGLYAMKFNKPSKIQEKALPLLLSDPPHNMIGQSQSGTGKTGAFSLTMLSRVDPNLKAVQCICLAPSRELARQTLDVVDEMKKFTDITTHLIVPESTERGQKVTSQILVGTPGSVAGLLQKKQIDAKHVKVFVLDEADNMVDSSMGSTCARIKKYLPSSTQVVLFSATFPESVLDLAGKMCPNPNEIRLKANELNVDAITQLYMDCEDGEEKFKMLEELYSMLTIASSVIFVAQRSTANALYQRMSKNGHKVSLLHSDLSVDERDRLMDDFRFGRSKVLISTNVIARGIDIATVSMVVNYDLPTDKNGKPDPETYLHRIGRTGRFGRSGVSISFVHDEASFEVLDSIQQSLGMTLTQVPTDDIDEVEEIIKKAIKGK.

The tract at residues 1–73 (MSDQVSDMLE…SKEDAEENNL (73 aa)) is disordered. 2 stretches are compositionally biased toward basic and acidic residues: residues 8–19 (MLEKLELQKEKN) and 26–64 (AKVEEVKEDDKKDVKEELNEDDKKVAKEDDKKEDAKEES). The Q motif signature appears at 99–127 (KRFEDLGLDENLLKGLYAMKFNKPSKIQE). Residues 132–298 (LLLSDPPHNM…GKMCPNPNEI (167 aa)) enclose the Helicase ATP-binding domain. Residue 145-152 (SQSGTGKT) coordinates ATP. The short motif at 246–249 (DEAD) is the DEAD box element. The Helicase C-terminal domain maps to 326-477 (MLEELYSMLT…QVPTDDIDEV (152 aa)).

Belongs to the DEAD box helicase family. DDX19/DBP5 subfamily. In terms of assembly, associates with the nuclear pore complex.

The protein localises to the cytoplasm. Its subcellular location is the nucleus. The protein resides in the nuclear pore complex. It localises to the nucleus membrane. The catalysed reaction is ATP + H2O = ADP + phosphate + H(+). Functionally, ATP-dependent RNA helicase associated with the nuclear pore complex and essential for mRNA export from the nucleus. May participate in a terminal step of mRNA export through the removal of proteins that accompany mRNA through the nucleopore complex. May also be involved in early transcription. This is ATP-dependent RNA helicase DBP5 (DBP5) from Yarrowia lipolytica (strain CLIB 122 / E 150) (Yeast).